The chain runs to 277 residues: Glycerol-3-phosphate acyltransferase (277 aa).

The next 5 membrane-spanning stretches (helical) occupy residues 3–23 (LFIFLILVGYLMGSINSAIIV), 55–75 (IMVMVFDALKGILPVILAKLL), 79–99 (PVTVAFTALAAVVGHMYPVFF), 111–131 (IGALLAFHFVIGVMVAATWLL), and 155–175 (LILVGNLNIFPPLFMITILVL). The disordered stretch occupies residues 207–277 (SPATSAEQEF…PKTKTVKEKE (71 aa)). Positions 216 to 239 (FPGKEVIDTNIDETEKTEQAEAVK) are enriched in basic and acidic residues. 2 stretches are compositionally biased toward basic residues: residues 240–253 (KPKVKKATTKAKKT) and 262–271 (KPKSTKPKTK).

The protein belongs to the PlsY family. As to quaternary structure, probably interacts with PlsX.

The protein localises to the cell inner membrane. It carries out the reaction an acyl phosphate + sn-glycerol 3-phosphate = a 1-acyl-sn-glycero-3-phosphate + phosphate. It functions in the pathway lipid metabolism; phospholipid metabolism. Catalyzes the transfer of an acyl group from acyl-phosphate (acyl-PO(4)) to glycerol-3-phosphate (G3P) to form lysophosphatidic acid (LPA). This enzyme utilizes acyl-phosphate as fatty acyl donor, but not acyl-CoA or acyl-ACP. The protein is Glycerol-3-phosphate acyltransferase of Legionella pneumophila (strain Corby).